Reading from the N-terminus, the 147-residue chain is Sec-independent protein translocase protein TatB (147 aa).

A helical membrane pass occupies residues 1 to 21 (MFDIGFWELVVIGVVALVVLG). Residues 114-147 (EPVAPISVATPDEEPTVIPAARAQPSAEQGEVKP) are disordered.

It belongs to the TatB family. In terms of assembly, the Tat system comprises two distinct complexes: a TatABC complex, containing multiple copies of TatA, TatB and TatC subunits, and a separate TatA complex, containing only TatA subunits. Substrates initially bind to the TatABC complex, which probably triggers association of the separate TatA complex to form the active translocon.

Its subcellular location is the cell inner membrane. In terms of biological role, part of the twin-arginine translocation (Tat) system that transports large folded proteins containing a characteristic twin-arginine motif in their signal peptide across membranes. Together with TatC, TatB is part of a receptor directly interacting with Tat signal peptides. TatB may form an oligomeric binding site that transiently accommodates folded Tat precursor proteins before their translocation. This Aeromonas hydrophila subsp. hydrophila (strain ATCC 7966 / DSM 30187 / BCRC 13018 / CCUG 14551 / JCM 1027 / KCTC 2358 / NCIMB 9240 / NCTC 8049) protein is Sec-independent protein translocase protein TatB.